A 165-amino-acid chain; its full sequence is MTRKQKRLAVIAGGMGFIIAAVLLVMFAFSQSVAYFYMPADLAKTPVAPETRIRLGGLVGAGSVVRGAGSTVEFTVTDGSANAVKVHYTGILPDLFREGQGVVTEGMFASAGNVFIADTVLAKHDETYMPKEVADKLKAQGLWQDGQGAQSQAGQGQGQEAKATR.

Residues 1 to 7 are Cytoplasmic-facing; sequence MTRKQKR. A helical; Signal-anchor for type II membrane protein membrane pass occupies residues 8–28; it reads LAVIAGGMGFIIAAVLLVMFA. Topologically, residues 29–165 are periplasmic; it reads FSQSVAYFYM…GQGQEAKATR (137 aa). The heme site is built by H124 and Y128. Positions 144–154 are enriched in low complexity; sequence QDGQGAQSQAG. The segment at 144–165 is disordered; sequence QDGQGAQSQAGQGQGQEAKATR.

Belongs to the CcmE/CycJ family.

The protein resides in the cell inner membrane. Heme chaperone required for the biogenesis of c-type cytochromes. Transiently binds heme delivered by CcmC and transfers the heme to apo-cytochromes in a process facilitated by CcmF and CcmH. This Rhizobium etli (strain CIAT 652) protein is Cytochrome c-type biogenesis protein CcmE.